The sequence spans 523 residues: Mediator of RNA polymerase II transcription subunit 1.2 (523 aa).

The protein belongs to the Mediator complex subunit 1 family. As to quaternary structure, component of the Mediator complex.

Its subcellular location is the nucleus. In terms of biological role, component of the Mediator complex, a coactivator involved in the regulated transcription of nearly all RNA polymerase II-dependent genes. Mediator functions as a bridge to convey information from gene-specific regulatory proteins to the basal RNA polymerase II transcription machinery. Mediator is recruited to promoters by direct interactions with regulatory proteins and serves as a scaffold for the assembly of a functional preinitiation complex with RNA polymerase II and the general transcription factors. The chain is Mediator of RNA polymerase II transcription subunit 1.2 (mdt-1.2) from Caenorhabditis briggsae.